Consider the following 323-residue polypeptide: Acetyl-coenzyme A carboxylase carboxyl transferase subunit alpha (323 aa).

The 262-residue stretch at 32 to 293 (NISEEVAKLQ…RKALAAQLES (262 aa)) folds into the CoA carboxyltransferase C-terminal domain.

Belongs to the AccA family. In terms of assembly, acetyl-CoA carboxylase is a heterohexamer composed of biotin carboxyl carrier protein (AccB), biotin carboxylase (AccC) and two subunits each of ACCase subunit alpha (AccA) and ACCase subunit beta (AccD).

It localises to the cytoplasm. It catalyses the reaction N(6)-carboxybiotinyl-L-lysyl-[protein] + acetyl-CoA = N(6)-biotinyl-L-lysyl-[protein] + malonyl-CoA. Its pathway is lipid metabolism; malonyl-CoA biosynthesis; malonyl-CoA from acetyl-CoA: step 1/1. Its function is as follows. Component of the acetyl coenzyme A carboxylase (ACC) complex. First, biotin carboxylase catalyzes the carboxylation of biotin on its carrier protein (BCCP) and then the CO(2) group is transferred by the carboxyltransferase to acetyl-CoA to form malonyl-CoA. In Alcanivorax borkumensis (strain ATCC 700651 / DSM 11573 / NCIMB 13689 / SK2), this protein is Acetyl-coenzyme A carboxylase carboxyl transferase subunit alpha.